The primary structure comprises 373 residues: Glutamate 5-kinase (373 aa).

Lys-15 lines the ATP pocket. Substrate contacts are provided by Ser-56, Asp-143, and Asn-155. 175 to 176 contacts ATP; that stretch reads SD. Residues 281 to 358 enclose the PUA domain; sequence KGTLTIDAGA…PDVMTILGIS (78 aa).

This sequence belongs to the glutamate 5-kinase family.

The protein resides in the cytoplasm. It catalyses the reaction L-glutamate + ATP = L-glutamyl 5-phosphate + ADP. The protein operates within amino-acid biosynthesis; L-proline biosynthesis; L-glutamate 5-semialdehyde from L-glutamate: step 1/2. Catalyzes the transfer of a phosphate group to glutamate to form L-glutamate 5-phosphate. The chain is Glutamate 5-kinase from Bradyrhizobium diazoefficiens (strain JCM 10833 / BCRC 13528 / IAM 13628 / NBRC 14792 / USDA 110).